The following is a 1794-amino-acid chain: Non-reducing polyketide synthase nscA (1794 aa).

An N-terminal acylcarrier protein transacylase domain (SAT) region spans residues 19 to 256 (DLKDLFRRLH…PLPVYDGLCH (238 aa)). Residues 389-822 (ASKLAIVGMA…GGNTTVLLED (434 aa)) enclose the Ketosynthase family 3 (KS3) domain. Positions 428–440 (DRFDLNTHYDPTG) are enriched in basic and acidic residues. Residues 428-448 (DRFDLNTHYDPTGKTENATQT) form a disordered region. Residues C562, H697, and H740 each act as for beta-ketoacyl synthase activity in the active site. A malonyl-CoA:ACP transacylase (MAT) domain region spans residues 927 to 1230 (TFTGQGAYYS…SVISSCRRNE (304 aa)). The segment at 1314 to 1633 (TSLVHQITTE…RLLMDRFFSP (320 aa)) is product template (PT) domain. The N-terminal hotdog fold stretch occupies residues 1318 to 1454 (HQITTETVEA…CVVRFEDPAA (137 aa)). Residues 1318–1628 (HQITTETVEA…FRRVPRLLMD (311 aa)) form the PKS/mFAS DH domain. H1350 acts as the Proton acceptor; for dehydratase activity in catalysis. Positions 1482–1628 (ASKLSKPLAY…FRRVPRLLMD (147 aa)) are C-terminal hotdog fold. Residue D1539 is the Proton donor; for dehydratase activity of the active site. The segment at 1637-1719 (SHTEKQLQET…ATSDRGDSTD (83 aa)) is disordered. Residues 1644–1655 (QETAPSATNVKK) show a composition bias toward polar residues. In terms of domain architecture, Carrier spans 1717 to 1794 (STDAGVVGQC…EMTAWLEEYC (78 aa)). At S1754 the chain carries O-(pantetheine 4'-phosphoryl)serine.

Pantetheine 4'-phosphate serves as cofactor.

It participates in secondary metabolite biosynthesis. In terms of biological role, non-reducing polyketide synthase; part of the gene cluster that mediates the biosynthesis of neosartoricin, a prenylated anthracenone that exhibits T-cell antiproliferative activity, suggestive of a physiological role as an immunosuppressive agent. The non-reducing polyketide synthase nscA probably synthesizes and cyclizes the decaketide backbone. The hydrolase nscB then mediates the product release through hydrolysis followed by spontaneous decarboxylation. The prenyltransferase nscD catalyzes the addition of the dimethylallyl group to the aromatic C5. The FAD-dependent monooxygenase nscC is then responsible for the stereospecific hydroxylation at C2. There is no gene encoding O-acetyltransferase in the nsc gene cluster; thus, the last step of 2-O-acetylation leading to neosartoricin may be catalyzed by an unidentified O-acetyltransferase. This Aspergillus fumigatus (strain ATCC MYA-4609 / CBS 101355 / FGSC A1100 / Af293) (Neosartorya fumigata) protein is Non-reducing polyketide synthase nscA.